The following is a 468-amino-acid chain: MSQGKIVQIIGAVVDVEFPRESVPKVYDALKVENTEITLEVQQQLGDGVVRTIALGSTDGLKRNLVAVNTGRGISVPVGAGTLGRIMDVLGRPIDEAGPVAASDSWEIHRAAPSYEDQSPATELLETGIKVIDLMCPFAKGGKVGLFGGAGVGKTVNMMELINNIAKAHSGLSVFAGVGERTREGNDFYHEMKDSNVLDKVAMVYGQMNEPPGNRLRVALTGLTMAEYFRDEKDENGKGKDVLLFVDNIYRYTLAGTEVSALLGRMPSAVGYQPTLAEEMGVLQERITSTKNGSITSIQAVYVPADDLTDPSPATTFAHLDSTVTLSRSIASLGIYPAVDPLDSTSRQMDPLVIGHEHYDTAQRVQQTLQKYKELKDIIAILGMDELSEEDKQAVSRARKIERFFSQPFHVAEVFTGSPGKYVPLKDTIRGFKAIVDGEYDHLPEQAFYMVGGIEEAVEKAKKMAEKA.

148 to 155 (GGAGVGKT) is a binding site for ATP.

Belongs to the ATPase alpha/beta chains family. F-type ATPases have 2 components, CF(1) - the catalytic core - and CF(0) - the membrane proton channel. CF(1) has five subunits: alpha(3), beta(3), gamma(1), delta(1), epsilon(1). CF(0) has three main subunits: a(1), b(2) and c(9-12). The alpha and beta chains form an alternating ring which encloses part of the gamma chain. CF(1) is attached to CF(0) by a central stalk formed by the gamma and epsilon chains, while a peripheral stalk is formed by the delta and b chains.

It localises to the cell membrane. It carries out the reaction ATP + H2O + 4 H(+)(in) = ADP + phosphate + 5 H(+)(out). Functionally, produces ATP from ADP in the presence of a proton gradient across the membrane. The catalytic sites are hosted primarily by the beta subunits. The protein is ATP synthase subunit beta of Stenotrophomonas maltophilia (strain K279a).